The sequence spans 143 residues: Transcription antitermination protein NusB (143 aa).

The protein belongs to the NusB family.

Functionally, involved in transcription antitermination. Required for transcription of ribosomal RNA (rRNA) genes. Binds specifically to the boxA antiterminator sequence of the ribosomal RNA (rrn) operons. The sequence is that of Transcription antitermination protein NusB from Mannheimia succiniciproducens (strain KCTC 0769BP / MBEL55E).